The sequence spans 31 residues: Kappa-theraphotoxin-Ps1b (31 aa).

Intrachain disulfides connect Cys2–Cys16, Cys9–Cys21, and Cys15–Cys25. Methionine amide is present on Met31.

This sequence belongs to the neurotoxin 30 (phrixotoxin) family. In terms of tissue distribution, expressed by the venom gland.

It is found in the secreted. Potent and specific blocker of Kv4.2/KCND2 (IC(50)=34 nM) and Kv4.3/KCND3 (IC(50)=71 nM) potassium channels. Acts by altering the gating properties of these channels. The protein is Kappa-theraphotoxin-Ps1b of Paraphysa scrofa (Chilean copper tarantula).